Here is a 523-residue protein sequence, read N- to C-terminus: MVLFGVLTMILAIALFSLRIPAIYFNRITIILLLFSALLSYNSLYMNNIGSGVGVFGGLFQVTTITQSIDVFIYLLGALVLLLSEKANRANTLSFNKLNSTLVNKSKGLSVLAEYPLIALFSVLGMSSLISSSDLISMFLSIELQSFAVYILATIYRESESATSAGLKYFLLGSLSSALILLGSSLLYSFTGLTSFEGLYMLCSTTETNTAIEISVLLIMVGLLFKVSAAPFHNWAPDVYDGVPTVVTTWLTTMPKIAFLVFILEFQGFTQLANWSSWTNLLLISSLLSLLIGTIGGLAQYRIKRLLTYSTISHVGFLLLALAINNEESVESFLFYLIQYSLTNINVFFILVAFGYLLGSKGLSIYSPIQLINQLKGQFKVNPLLGLSLAICLFSMAGIPPLVGFFGKQMVLYAATHNGNFFLAFVAILVSVVSAAYYLRIIKVIHFDPVPAPSALSLIKTTEISSDLNVTETNNSLEGSSEELSTSSSLVIATITLLLIFFIINPTPLLNSVHLITLNLFYW.

14 consecutive transmembrane segments (helical) span residues Leu3–Ile23, Ile30–Gly50, Val62–Leu82, Ser110–Ile130, Leu135–Ile155, Phe170–Phe190, Ile212–Phe232, Val246–Phe266, Leu281–Tyr301, Leu306–Asn326, Phe333–Ala353, Gly386–Phe406, Gly419–Leu439, and Leu490–Leu510.

The protein belongs to the complex I subunit 2 family.

It is found in the mitochondrion inner membrane. It catalyses the reaction a ubiquinone + NADH + 5 H(+)(in) = a ubiquinol + NAD(+) + 4 H(+)(out). Functionally, core subunit of the mitochondrial membrane respiratory chain NADH dehydrogenase (Complex I) that is believed to belong to the minimal assembly required for catalysis. Complex I functions in the transfer of electrons from NADH to the respiratory chain. The immediate electron acceptor for the enzyme is believed to be ubiquinone. The protein is NADH-ubiquinone oxidoreductase chain 2 of Rhizopus oryzae (Mucormycosis agent).